We begin with the raw amino-acid sequence, 708 residues long: Chaperonin-containing T-complex member BBS12 (708 aa).

Belongs to the TCP-1 chaperonin family. BBS12 subfamily. Component of the chaperonin-containing T-complex (TRiC), a heterooligomeric complex of about 850 to 900 kDa that forms two stacked rings, 12 to 16 nm in diameter. Interacts with MKKS.

It is found in the cell projection. The protein resides in the cilium. Functionally, component of the chaperonin-containing T-complex (TRiC), a molecular chaperone complex that assists the folding of proteins upon ATP hydrolysis. As part of the TRiC complex may play a role in the assembly of BBSome, a complex involved in ciliogenesis regulating transports vesicles to the cilia. Involved in adipogenic differentiation. This is Chaperonin-containing T-complex member BBS12 (Bbs12) from Mus musculus (Mouse).